Reading from the N-terminus, the 105-residue chain is Pyrimidine/purine nucleoside phosphorylase (105 aa).

This sequence belongs to the nucleoside phosphorylase PpnP family.

It catalyses the reaction a purine D-ribonucleoside + phosphate = a purine nucleobase + alpha-D-ribose 1-phosphate. It carries out the reaction adenosine + phosphate = alpha-D-ribose 1-phosphate + adenine. The catalysed reaction is cytidine + phosphate = cytosine + alpha-D-ribose 1-phosphate. The enzyme catalyses guanosine + phosphate = alpha-D-ribose 1-phosphate + guanine. It catalyses the reaction inosine + phosphate = alpha-D-ribose 1-phosphate + hypoxanthine. It carries out the reaction thymidine + phosphate = 2-deoxy-alpha-D-ribose 1-phosphate + thymine. The catalysed reaction is uridine + phosphate = alpha-D-ribose 1-phosphate + uracil. The enzyme catalyses xanthosine + phosphate = alpha-D-ribose 1-phosphate + xanthine. Catalyzes the phosphorolysis of diverse nucleosides, yielding D-ribose 1-phosphate and the respective free bases. Can use uridine, adenosine, guanosine, cytidine, thymidine, inosine and xanthosine as substrates. Also catalyzes the reverse reactions. This is Pyrimidine/purine nucleoside phosphorylase from Cupriavidus necator (strain ATCC 17699 / DSM 428 / KCTC 22496 / NCIMB 10442 / H16 / Stanier 337) (Ralstonia eutropha).